The sequence spans 576 residues: Lysine--tRNA ligase (576 aa).

Residues Glu-413 and Glu-420 each coordinate Mg(2+).

This sequence belongs to the class-II aminoacyl-tRNA synthetase family. Homodimer. Mg(2+) serves as cofactor.

The protein resides in the cytoplasm. The catalysed reaction is tRNA(Lys) + L-lysine + ATP = L-lysyl-tRNA(Lys) + AMP + diphosphate. This chain is Lysine--tRNA ligase, found in Bacteroides thetaiotaomicron (strain ATCC 29148 / DSM 2079 / JCM 5827 / CCUG 10774 / NCTC 10582 / VPI-5482 / E50).